We begin with the raw amino-acid sequence, 312 residues long: Olfactory receptor 2J2 (312 aa).

Residues 1-26 (MMIKKNASSEDFFILLGFSNWPQLEV) lie on the Extracellular side of the membrane. N6 carries N-linked (GlcNAc...) asparagine glycosylation. A helical transmembrane segment spans residues 27–50 (VLFVVILIFYLMTLTGNLFIIILS). Over 51-58 (YVDSHLHT) the chain is Cytoplasmic. The helical transmembrane segment at 59-80 (PMYFFLSNLSFLDLCHTTSSIP) threads the bilayer. Over 81–101 (QLLVNLRGPEKTISYAGCMVQ) the chain is Extracellular. A disulfide bridge connects residues C98 and C190. Residues 102-121 (LYFVLALGIAECVLLVVMSY) traverse the membrane as a helical segment. The Cytoplasmic segment spans residues 122–140 (DRYVAVCRPLHYTVLMHPR). The helical transmembrane segment at 141–159 (FCHLLAAASWVIGFTISAL) threads the bilayer. Residues 160–196 (HSSFTFWVPLCGHRLVDHFFCEVPALLRLSCVDTHAN) lie on the Extracellular side of the membrane. The helical transmembrane segment at 197-220 (ELTLMVMSSIFVLIPLILILTAYG) threads the bilayer. The Cytoplasmic portion of the chain corresponds to 221–237 (AIARAVLSMQSTTGLQK). A helical membrane pass occupies residues 238-260 (VFRTCGAHLMVVSLFFIPVMCMY). Topologically, residues 261 to 273 (LQPPSENSPDQGK) are extracellular. Residues 274 to 293 (FIALFYTVVTPSLNPLIYTL) traverse the membrane as a helical segment. Residues 294-312 (RNKHVKGAAKRLLGWEWGK) lie on the Cytoplasmic side of the membrane.

Belongs to the G-protein coupled receptor 1 family.

It localises to the cell membrane. Odorant receptor. The chain is Olfactory receptor 2J2 (OR2J2) from Homo sapiens (Human).